We begin with the raw amino-acid sequence, 213 residues long: Large ribosomal subunit protein uL1 (213 aa).

The protein belongs to the universal ribosomal protein uL1 family. Part of the 50S ribosomal subunit.

Functionally, binds directly to 23S rRNA. Probably involved in E site tRNA release. Protein L1 is also a translational repressor protein, it controls the translation of its operon by binding to its mRNA. The sequence is that of Large ribosomal subunit protein uL1 from Methanosarcina acetivorans (strain ATCC 35395 / DSM 2834 / JCM 12185 / C2A).